Here is a 250-residue protein sequence, read N- to C-terminus: Green-light absorbing proteorhodopsin (250 aa).

The signal sequence occupies residues 1–18; it reads MGKLLLILGSVIALPTFA. Over 19–29 the chain is Extracellular; that stretch reads AGGGDLDASDY. A helical transmembrane segment spans residues 30 to 53; that stretch reads TGVSFWLVTAALLASTVFFFVERD. Topologically, residues 54–58 are cytoplasmic; the sequence is RVSAK. Residues 59 to 87 traverse the membrane as a helical segment; sequence WKTSLTVSGLVTGIAFWHYMYMRGVWIET. Residues 88 to 90 lie on the Extracellular side of the membrane; the sequence is GDS. Residues 91 to 118 traverse the membrane as a helical segment; sequence PTVFRYIDWLLTVPLLICEFYLILAAAT. Topologically, residues 119–121 are cytoplasmic; that stretch reads NVA. The helical transmembrane segment at 122–144 threads the bilayer; it reads GSLFKKLLVGSLVMLVFGYMGEA. Residues 145-147 are Extracellular-facing; the sequence is GIM. Residues 148–177 form a helical membrane-spanning segment; that stretch reads AAWPAFIIGCLAWVYMIYELWAGEGKSACN. The Cytoplasmic portion of the chain corresponds to 178 to 180; it reads TAS. Residues 181–208 traverse the membrane as a helical segment; the sequence is PAVQSAYNTMMYIIIFGWAIYPVGYFTG. The Extracellular segment spans residues 209–218; that stretch reads YLMGDGGSAL. The helical transmembrane segment at 219–249 threads the bilayer; sequence NLNLIYNLADFVNKILFGLIIWNVAVKESSN. Position 232 is an N6-(retinylidene)lysine (Lys232). Position 250 (Ala250) is a topological domain, cytoplasmic.

It belongs to the archaeal/bacterial/fungal opsin family. Homopentamer. GPR protomers assemble into a pentamer around a central pore with a C5 symmetry axis. Post-translationally, contains one covalently linked retinal chromophore per subunit.

The protein localises to the cell membrane. Its function is as follows. Light-driven proton pump. The protein is Green-light absorbing proteorhodopsin of Unknown prokaryotic organism.